The following is a 120-amino-acid chain: Large ribosomal subunit protein uL18 (120 aa).

It belongs to the universal ribosomal protein uL18 family. Part of the 50S ribosomal subunit; part of the 5S rRNA/L5/L18/L25 subcomplex. Contacts the 5S and 23S rRNAs.

In terms of biological role, this is one of the proteins that bind and probably mediate the attachment of the 5S RNA into the large ribosomal subunit, where it forms part of the central protuberance. The chain is Large ribosomal subunit protein uL18 from Rippkaea orientalis (strain PCC 8801 / RF-1) (Cyanothece sp. (strain PCC 8801)).